Consider the following 272-residue polypeptide: NAD kinase (272 aa).

Aspartate 50 serves as the catalytic Proton acceptor. NAD(+) contacts are provided by residues 50–51 (DG), 126–127 (NE), arginine 152, aspartate 154, 165–170 (TAYNKS), and alanine 189.

It belongs to the NAD kinase family. It depends on a divalent metal cation as a cofactor.

The protein localises to the cytoplasm. The enzyme catalyses NAD(+) + ATP = ADP + NADP(+) + H(+). In terms of biological role, involved in the regulation of the intracellular balance of NAD and NADP, and is a key enzyme in the biosynthesis of NADP. Catalyzes specifically the phosphorylation on 2'-hydroxyl of the adenosine moiety of NAD to yield NADP. In Streptococcus pneumoniae (strain Hungary19A-6), this protein is NAD kinase.